A 430-amino-acid chain; its full sequence is Probable ribosomal RNA small subunit methyltransferase B (430 aa).

Residues 246 to 252 (CAAPGSK), Asp-270, Asp-299, and Asp-318 contribute to the S-adenosyl-L-methionine site. The active-site Nucleophile is Cys-371.

The protein belongs to the class I-like SAM-binding methyltransferase superfamily. RsmB/NOP family.

It is found in the cytoplasm. It catalyses the reaction cytidine(967) in 16S rRNA + S-adenosyl-L-methionine = 5-methylcytidine(967) in 16S rRNA + S-adenosyl-L-homocysteine + H(+). Specifically methylates the cytosine at position 967 (m5C967) of 16S rRNA. This Coxiella burnetii (strain RSA 493 / Nine Mile phase I) protein is Probable ribosomal RNA small subunit methyltransferase B.